Reading from the N-terminus, the 1331-residue chain is Lysine-specific demethylase 3A-A (1331 aa).

Disordered stretches follow at residues 243 to 280, 358 to 381, and 497 to 532; these read LNDKSRKPRAPKRKSQDTESEDQTELKQTRNEEVPSKD, TPPQANSPPSFGAATPQGKGTQNL, and KVVKKPENNHTSVRAIKPQEPPYPKSPNKNDGVTYP. Residues 266 to 280 show a composition bias toward basic and acidic residues; it reads TELKQTRNEEVPSKD. Residues 683–708 form a C6-type zinc finger; sequence CDACDTTIFNLHWVCPKCGFGVCVDC. Residues 894–898 carry the LXXLL motif motif; it reads LRNLL. The JmjC domain occupies 1086-1291; it reads RREGKLNLAA…HCFWLTQEFR (206 aa). Fe cation contacts are provided by H1130, D1132, and H1259.

The protein belongs to the JHDM2 histone demethylase family. Requires Fe(2+) as cofactor.

Its subcellular location is the cytoplasm. It localises to the nucleus. It carries out the reaction N(6),N(6)-dimethyl-L-lysyl(9)-[histone H3] + 2 2-oxoglutarate + 2 O2 = L-lysyl(9)-[histone H3] + 2 formaldehyde + 2 succinate + 2 CO2. Histone demethylase that specifically demethylates 'Lys-9' of histone H3, thereby playing a central role in histone code. Preferentially demethylates mono- and dimethylated H3 'Lys-9' residue, with a preference for dimethylated residue, while it has weak or no activity on trimethylated H3 'Lys-9'. Demethylation of Lys residue generates formaldehyde and succinate. The chain is Lysine-specific demethylase 3A-A (kdm3a-a) from Xenopus laevis (African clawed frog).